A 400-amino-acid chain; its full sequence is Subtilisin-like protease 7 (400 aa).

Residues Met1–Gly20 form the signal peptide. Residues Ala21–Asn119 constitute a propeptide that is removed on maturation. Residues Lys36–Ile118 enclose the Inhibitor I9 domain. Asn58 is a glycosylation site (N-linked (GlcNAc...) asparagine). The 272-residue stretch at Ser129–Met400 folds into the Peptidase S8 domain. Catalysis depends on charge relay system residues Asp161 and His192. Asn222 and Asn252 each carry an N-linked (GlcNAc...) asparagine glycan. The active-site Charge relay system is Ser346. Asn396 carries an N-linked (GlcNAc...) asparagine glycan.

It belongs to the peptidase S8 family.

It localises to the secreted. Its function is as follows. Secreted subtilisin-like serine protease with keratinolytic activity that contributes to pathogenicity. The polypeptide is Subtilisin-like protease 7 (SUB7) (Arthroderma benhamiae (Trichophyton mentagrophytes)).